A 559-amino-acid chain; its full sequence is O-fucosyltransferase 37 (559 aa).

A helical; Signal-anchor for type II membrane protein transmembrane segment spans residues Phe53–Ser73. An N-linked (GlcNAc...) asparagine glycan is attached at Asn126. A substrate-binding site is contributed by His331–Arg333. 4 N-linked (GlcNAc...) asparagine glycosylation sites follow: Asn372, Asn403, Asn447, and Asn504.

The protein belongs to the glycosyltransferase GT106 family.

The protein localises to the membrane. It participates in glycan metabolism. The polypeptide is O-fucosyltransferase 37 (Arabidopsis thaliana (Mouse-ear cress)).